The primary structure comprises 477 residues: Alkaline phosphatase (477 aa).

Residue Asp44 participates in Mg(2+) binding. Residue Asp44 participates in Zn(2+) binding. The active-site Phosphoserine intermediate is Ser94. Asn124 carries an N-linked (GlcNAc...) asparagine glycan. Positions 155 and 157 each coordinate Mg(2+). An intrachain disulfide couples Cys165 to Cys185. The N-linked (GlcNAc...) asparagine glycan is linked to Asn214. Glu315 lines the Mg(2+) pocket. Zn(2+) is bound by residues Asp320, His324, Asp361, and His362. An N-linked (GlcNAc...) asparagine glycan is attached at Asn413. Residue His437 participates in Zn(2+) binding.

Homodimer. Mg(2+) is required as a cofactor. Requires Zn(2+) as cofactor.

It is found in the cell membrane. It carries out the reaction a phosphate monoester + H2O = an alcohol + phosphate. The sequence is that of Alkaline phosphatase from Gadus morhua (Atlantic cod).